Reading from the N-terminus, the 303-residue chain is Putative S-adenosyl-L-methionine-dependent methyltransferase SCO6443 (303 aa).

S-adenosyl-L-methionine-binding positions include aspartate 130 and 159-160; that span reads DL.

Belongs to the UPF0677 family.

In terms of biological role, exhibits S-adenosyl-L-methionine-dependent methyltransferase activity. This Streptomyces coelicolor (strain ATCC BAA-471 / A3(2) / M145) protein is Putative S-adenosyl-L-methionine-dependent methyltransferase SCO6443.